The sequence spans 430 residues: Tol-Pal system protein TolB (430 aa).

A signal peptide spans 1 to 21; the sequence is MKQAFRVALGFLVLWASVLHA.

The protein belongs to the TolB family. The Tol-Pal system is composed of five core proteins: the inner membrane proteins TolA, TolQ and TolR, the periplasmic protein TolB and the outer membrane protein Pal. They form a network linking the inner and outer membranes and the peptidoglycan layer.

The protein resides in the periplasm. Functionally, part of the Tol-Pal system, which plays a role in outer membrane invagination during cell division and is important for maintaining outer membrane integrity. TolB occupies a key intermediary position in the Tol-Pal system because it communicates directly with both membrane-embedded components, Pal in the outer membrane and TolA in the inner membrane. This Yersinia pestis protein is Tol-Pal system protein TolB.